Consider the following 286-residue polypeptide: Large ribosomal subunit protein uL3 (286 aa).

An N5-methylglutamine modification is found at Gln-152. The segment covering 246 to 265 (EAAAAAAAAEEQAAMEAAEA) has biased composition (low complexity). The segment at 246-286 (EAAAAAAAAEEQAAMEAAEAAEAKTDTVAEAEAAEKKEGDA) is disordered. The segment covering 266–286 (AEAKTDTVAEAEAAEKKEGDA) has biased composition (basic and acidic residues).

It belongs to the universal ribosomal protein uL3 family. In terms of assembly, part of the 50S ribosomal subunit. Forms a cluster with proteins L14 and L19. Methylated by PrmB.

One of the primary rRNA binding proteins, it binds directly near the 3'-end of the 23S rRNA, where it nucleates assembly of the 50S subunit. In Roseobacter denitrificans (strain ATCC 33942 / OCh 114) (Erythrobacter sp. (strain OCh 114)), this protein is Large ribosomal subunit protein uL3.